The chain runs to 416 residues: Exodeoxyribonuclease 7 large subunit (416 aa).

This sequence belongs to the XseA family. Heterooligomer composed of large and small subunits.

The protein resides in the cytoplasm. It carries out the reaction Exonucleolytic cleavage in either 5'- to 3'- or 3'- to 5'-direction to yield nucleoside 5'-phosphates.. Functionally, bidirectionally degrades single-stranded DNA into large acid-insoluble oligonucleotides, which are then degraded further into small acid-soluble oligonucleotides. The polypeptide is Exodeoxyribonuclease 7 large subunit (Acidothermus cellulolyticus (strain ATCC 43068 / DSM 8971 / 11B)).